Here is a 256-residue protein sequence, read N- to C-terminus: Imidazole glycerol phosphate synthase subunit HisF (256 aa).

Catalysis depends on residues Asp-12 and Asp-131.

It belongs to the HisA/HisF family. As to quaternary structure, heterodimer of HisH and HisF.

The protein localises to the cytoplasm. The enzyme catalyses 5-[(5-phospho-1-deoxy-D-ribulos-1-ylimino)methylamino]-1-(5-phospho-beta-D-ribosyl)imidazole-4-carboxamide + L-glutamine = D-erythro-1-(imidazol-4-yl)glycerol 3-phosphate + 5-amino-1-(5-phospho-beta-D-ribosyl)imidazole-4-carboxamide + L-glutamate + H(+). The protein operates within amino-acid biosynthesis; L-histidine biosynthesis; L-histidine from 5-phospho-alpha-D-ribose 1-diphosphate: step 5/9. Its function is as follows. IGPS catalyzes the conversion of PRFAR and glutamine to IGP, AICAR and glutamate. The HisF subunit catalyzes the cyclization activity that produces IGP and AICAR from PRFAR using the ammonia provided by the HisH subunit. This Bifidobacterium longum (strain NCC 2705) protein is Imidazole glycerol phosphate synthase subunit HisF.